We begin with the raw amino-acid sequence, 1269 residues long: Regulator of nonsense transcripts 2 (1269 aa).

Disordered stretches follow at residues 1–125 (MPAE…EKEE) and 143–162 (LRSKNQNAPDNRPEENFFSR). A coiled-coil region spans residues 57–133 (KKRLEEDKRK…EESLQLHQEA (77 aa)). Residues 94 to 132 (KKKQEEEERKKQEEQAKRQQEEAAAQLKEKEESLQLHQE) are sufficient for interaction with UPF1. One can recognise an MIF4G 1 domain in the interval 168–396 (KKNTAFVKKL…KGELSEDRHK (229 aa)). 2 disordered regions span residues 422 to 444 (NMPDLPQDKPTPEEHGPGIDIFT) and 487 to 518 (KSQNKDSNKDDSKEAKEPKDNKEASSPDDLEL). Basic and acidic residues-rich tracts occupy residues 427-438 (PQDKPTPEEHGP) and 487-511 (KSQNKDSNKDDSKEAKEPKDNKEAS). MIF4G domains follow at residues 571 to 755 (QQLP…YCNP) and 774 to 984 (RKLL…LRPK). The tract at residues 709-926 (GRFLFRSPES…IRLVCTILDT (218 aa)) is sufficient for interaction with UPF3A and UPF3B. A sufficient for interaction with EIF4A1 and EIF1 region spans residues 755-1269 (PPPAEKTVRK…LIFKTGGRRR (515 aa)). The segment at 837–857 (EDVGIHVVDGVLEDIRLGMEV) is binds to UPF3B. Positions 1017–1090 (SKDSMTEGEN…KENETDEENA (74 aa)) are disordered. Acidic residues predominate over residues 1025–1073 (ENLEEDEEEEEGGAETEEQSGNESEVNEPEEEEGSEEEEEGEEEEEENT). Residues 1081–1269 (KENETDEENA…LIFKTGGRRR (189 aa)) form a sufficient for interaction with UPF1 C-terminus region. The residue at position 1085 (Thr-1085) is a Phosphothreonine. Interaction with UPF1 regions lie at residues 1102–1126 (VPCVEDEDFIQALDKMMLENLQQRS) and 1164–1204 (DTMP…AEQE). Residues 1102–1195 (VPCVEDEDFI…PMSSQLAANH (94 aa)) form a necessary for interaction with UPF1 region. The tract at residues 1218 to 1269 (ERQEQEDYQEMLQSLAQRPAPANTNRERRPRYQHPKGAPNADLIFKTGGRRR) is disordered.

As to quaternary structure, found in a post-splicing messenger ribonucleoprotein (mRNP) complex. Associates with the exon junction complex (EJC). Interacts with SMG1, EST1A, UPF3A, UPF3B, EIF4A1 and EIF1. Interacts with UPF1; interaction is promoted by TDRD6. Interacts with DDX4. Localized in male germ cells.

The protein resides in the cytoplasm. The protein localises to the perinuclear region. Involved in nonsense-mediated decay (NMD) of mRNAs containing premature stop codons by associating with the nuclear exon junction complex (EJC). Recruited by UPF3B associated with the EJC core at the cytoplasmic side of the nuclear envelope and the subsequent formation of an UPF1-UPF2-UPF3 surveillance complex (including UPF1 bound to release factors at the stalled ribosome) is believed to activate NMD. In cooperation with UPF3B stimulates both ATPase and RNA helicase activities of UPF1. Binds spliced mRNA. The sequence is that of Regulator of nonsense transcripts 2 from Mus musculus (Mouse).